A 342-amino-acid polypeptide reads, in one-letter code: S-adenosylmethionine:tRNA ribosyltransferase-isomerase (342 aa).

It belongs to the QueA family. As to quaternary structure, monomer.

The protein localises to the cytoplasm. The enzyme catalyses 7-aminomethyl-7-carbaguanosine(34) in tRNA + S-adenosyl-L-methionine = epoxyqueuosine(34) in tRNA + adenine + L-methionine + 2 H(+). It participates in tRNA modification; tRNA-queuosine biosynthesis. Transfers and isomerizes the ribose moiety from AdoMet to the 7-aminomethyl group of 7-deazaguanine (preQ1-tRNA) to give epoxyqueuosine (oQ-tRNA). The protein is S-adenosylmethionine:tRNA ribosyltransferase-isomerase of Streptococcus pyogenes serotype M2 (strain MGAS10270).